Consider the following 212-residue polypeptide: Pyridoxine/pyridoxamine 5'-phosphate oxidase (212 aa).

Substrate-binding positions include Arg-7–Tyr-10 and Lys-65. FMN contacts are provided by residues Arg-60–Lys-65, Phe-75–Thr-76, Lys-82, and Gln-104. Tyr-122, Arg-126, and Ser-130 together coordinate substrate. Residues Gln-139–Ser-140 and Trp-184 contribute to the FMN site. Arg-190 to His-192 contacts substrate. Arg-194 contacts FMN.

The protein belongs to the pyridoxamine 5'-phosphate oxidase family. As to quaternary structure, homodimer. The cofactor is FMN.

It carries out the reaction pyridoxamine 5'-phosphate + O2 + H2O = pyridoxal 5'-phosphate + H2O2 + NH4(+). The catalysed reaction is pyridoxine 5'-phosphate + O2 = pyridoxal 5'-phosphate + H2O2. Its pathway is cofactor metabolism; pyridoxal 5'-phosphate salvage; pyridoxal 5'-phosphate from pyridoxamine 5'-phosphate: step 1/1. It functions in the pathway cofactor metabolism; pyridoxal 5'-phosphate salvage; pyridoxal 5'-phosphate from pyridoxine 5'-phosphate: step 1/1. Its function is as follows. Catalyzes the oxidation of either pyridoxine 5'-phosphate (PNP) or pyridoxamine 5'-phosphate (PMP) into pyridoxal 5'-phosphate (PLP). The chain is Pyridoxine/pyridoxamine 5'-phosphate oxidase from Rippkaea orientalis (strain PCC 8801 / RF-1) (Cyanothece sp. (strain PCC 8801)).